Reading from the N-terminus, the 325-residue chain is D-alanine--D-alanine ligase (325 aa).

Residues 102–300 (KQIFRAAGIP…FTELVERMLQ (199 aa)) form the ATP-grasp domain. ATP is bound at residue 130 to 185 (AAELGSPLVIKPSNNGSTVGISIVRDERSFAQGLELARSVSSRIFLERYVPGKEIT). Positions 254, 267, and 269 each coordinate Mg(2+).

Belongs to the D-alanine--D-alanine ligase family. Requires Mg(2+) as cofactor. Mn(2+) is required as a cofactor.

Its subcellular location is the cytoplasm. The catalysed reaction is 2 D-alanine + ATP = D-alanyl-D-alanine + ADP + phosphate + H(+). It participates in cell wall biogenesis; peptidoglycan biosynthesis. Cell wall formation. This Synechococcus sp. (strain JA-2-3B'a(2-13)) (Cyanobacteria bacterium Yellowstone B-Prime) protein is D-alanine--D-alanine ligase.